The chain runs to 518 residues: MSFSILIAIAIFVGIISYYLWIWSFWIRKGVKGPRGLPFLGVIHKFTNYENPGALKFSEWTKKYGPVYGITEGVEKTLVISDPEFVHEVFVKQFDNFYGRKLTAIQGDPNKNKRVPLVAAQGHRWKRLRTLASPTFSNKSLRKIMGTVEESVTELVRSLEKASAEGKTLDMLEYYQEFTMDIIGKMAMGQEKSLMFRNPMLDKVKTIFKEGRNNVFMISGIFPFVGIALRNIFAKFPSLQMATDIQSILEKALNKRLEQREADEKAGIEPSGEPQDFIDLFLDARSTVDFFEGEAEQDFAKSEVLKVDKHLTFDEIIGQLFVFLLAGYDTTALSLSYSSYLLATHPEIQKKLQEEVDRECPDPEVTFDQLSKLKYLECVVKEALRLYPLASLVHNRKCLKTTNVLGMEIEAGTNINVDTWSLHHDPKVWGDDVNEFKPERWESGDELFFAKGGYLPFGMGPRICIGMRLAMMEMKMLLTNILKNYTFETTPETVIPLKLVGTATIAPSSVLLKLKSRF.

Cys464 serves as a coordination point for heme.

It belongs to the cytochrome P450 family. Heme is required as a cofactor.

Its function is as follows. Cytochromes P450 are a group of heme-thiolate monooxygenases. They oxidize a variety of structurally unrelated compounds, including steroids, fatty acids, and xenobiotics. The sequence is that of Putative cytochrome P450 CYP13A7 (cyp-13A7) from Caenorhabditis elegans.